The following is a 127-amino-acid chain: uncharacterized protein (127 aa).

3 helical membrane-spanning segments follow: residues 20 to 42, 54 to 76, and 91 to 110; these read NMIW…FMSS, IYFC…IFVY, and WILI…ASFT.

The protein localises to the membrane. The protein resides in the cytoplasm. This is an uncharacterized protein from Schizosaccharomyces pombe (strain 972 / ATCC 24843) (Fission yeast).